A 120-amino-acid chain; its full sequence is Inner membrane protein YidG (120 aa).

The Cytoplasmic portion of the chain corresponds to Met1–Ser21. Residues Leu22–Ile39 traverse the membrane as a helical segment. At Lys40–Met48 the chain is on the periplasmic side. Residues Leu49 to Thr68 form a helical membrane-spanning segment. At Arg69 to Lys90 the chain is on the cytoplasmic side. The chain crosses the membrane as a helical span at residues Phe91–Ile113. At Val114 to Ala120 the chain is on the periplasmic side.

It is found in the cell inner membrane. The sequence is that of Inner membrane protein YidG (yidG) from Escherichia coli O157:H7.